The primary structure comprises 338 residues: Ketol-acid reductoisomerase (NADP(+)) (338 aa).

The KARI N-terminal Rossmann domain maps to 1 to 181 (MKVYYDKDAD…GGTKGGVIET (181 aa)). NADP(+) is bound by residues 24–27 (YGSQ), Arg47, Ser52, and 82–85 (DETQ). His107 is an active-site residue. Residue Gly133 participates in NADP(+) binding. Residues 182–327 (SFREETETDL…AELRAMMPWI (146 aa)) form the KARI C-terminal knotted domain. Asp190, Glu194, Glu226, and Glu230 together coordinate Mg(2+). Residue Ser251 coordinates substrate.

The protein belongs to the ketol-acid reductoisomerase family. Mg(2+) is required as a cofactor.

It catalyses the reaction (2R)-2,3-dihydroxy-3-methylbutanoate + NADP(+) = (2S)-2-acetolactate + NADPH + H(+). It carries out the reaction (2R,3R)-2,3-dihydroxy-3-methylpentanoate + NADP(+) = (S)-2-ethyl-2-hydroxy-3-oxobutanoate + NADPH + H(+). It functions in the pathway amino-acid biosynthesis; L-isoleucine biosynthesis; L-isoleucine from 2-oxobutanoate: step 2/4. The protein operates within amino-acid biosynthesis; L-valine biosynthesis; L-valine from pyruvate: step 2/4. Its function is as follows. Involved in the biosynthesis of branched-chain amino acids (BCAA). Catalyzes an alkyl-migration followed by a ketol-acid reduction of (S)-2-acetolactate (S2AL) to yield (R)-2,3-dihydroxy-isovalerate. In the isomerase reaction, S2AL is rearranged via a Mg-dependent methyl migration to produce 3-hydroxy-3-methyl-2-ketobutyrate (HMKB). In the reductase reaction, this 2-ketoacid undergoes a metal-dependent reduction by NADPH to yield (R)-2,3-dihydroxy-isovalerate. The sequence is that of Ketol-acid reductoisomerase (NADP(+)) from Laribacter hongkongensis (strain HLHK9).